A 249-amino-acid polypeptide reads, in one-letter code: MTTPDGIVSALAVALARQSESHADCPLFNDPYAQVFIDAALSRGCQLPSDETSERINGIANYASSRTKWFDEYFIAAGAHGLEQMVIVAAGLDARAWRLPWVAGTTLFEIDHPGVLKFKNEALHEHGESPSVSRYVPVPADLSDGWSERLRDAGFDVSEPTAWAVEGLLPYVADGPHLLFDRIHEISPAGSRLAVEAVGTGVADWLSTQGWQVTMIGAQELMTRYGRCGDHSDTDAGMDTVFVNATRTR.

Residues D111 and D141–L142 each bind S-adenosyl-L-methionine.

Belongs to the UPF0677 family.

In terms of biological role, exhibits S-adenosyl-L-methionine-dependent methyltransferase activity. In Mycobacterium sp. (strain KMS), this protein is Putative S-adenosyl-L-methionine-dependent methyltransferase Mkms_0592.